A 411-amino-acid chain; its full sequence is Serpin A3-5 (411 aa).

A signal peptide spans 1-24; that stretch reads MRAERTSFLLALGLLMAGIRSVHC. Residues Asn100, Asn180, Asn230, Asn264, and Asn318 are each glycosylated (N-linked (GlcNAc...) asparagine).

It belongs to the serpin family. As to quaternary structure, homodimer.

The protein resides in the cytoplasmic vesicle. It is found in the secretory vesicle. The protein localises to the chromaffin granule. It localises to the secreted. Serine protease inhibitor. This Bos taurus (Bovine) protein is Serpin A3-5.